A 90-amino-acid chain; its full sequence is Protein LURE 1.2 (90 aa).

Residues 1-19 form the signal peptide; the sequence is MKLPIIFLTLLIFVSSCTS. Residue N23 is glycosylated (N-linked (GlcNAc...) asparagine). Cystine bridges form between C58–C75, C61–C82, and C65–C84. The tract at residues 67–87 is PRK6 binding; the sequence is RRGKYIRTCSFERKLCRCSIS.

It belongs to the DEFL family. As to quaternary structure, interacts with MDIS1, MIK1, MIK2 and TDR/PXY, but not with MDIS2. Binds to PRK6 LRRs. As to expression, expressed in the pistil. Detected exclusively in the synergid cells.

Its subcellular location is the secreted. Functionally, pollen tube attractants guiding pollen tubes to the ovular micropyle. Attracts specifically pollen tubes from A.thaliana, but not those from A.lyrata. Triggers endocytosis of MDIS1 in the pollen tube tip. In Arabidopsis thaliana (Mouse-ear cress), this protein is Protein LURE 1.2.